A 441-amino-acid polypeptide reads, in one-letter code: Cysteine--tRNA ligase (441 aa).

Cysteine 24 contacts Zn(2+). A 'HIGH' region motif is present at residues 26-36 (PTVYNYIHIGN). Zn(2+)-binding residues include cysteine 204, histidine 230, and glutamate 234. Positions 262-266 (KMSKS) match the 'KMSKS' region motif. ATP is bound at residue lysine 265.

It belongs to the class-I aminoacyl-tRNA synthetase family. In terms of assembly, monomer. Zn(2+) is required as a cofactor.

Its subcellular location is the cytoplasm. It catalyses the reaction tRNA(Cys) + L-cysteine + ATP = L-cysteinyl-tRNA(Cys) + AMP + diphosphate. The sequence is that of Cysteine--tRNA ligase from Mycoplasma mycoides subsp. mycoides SC (strain CCUG 32753 / NCTC 10114 / PG1).